The sequence spans 501 residues: Trans-cinnamate 4-monooxygenase (501 aa).

The helical transmembrane segment at 3–23 threads the bilayer; it reads LVLLEKALLGLFAAAVLAVAV. (E)-cinnamate-binding positions include 213–218 and Ala302; that span reads RSRLSQ. Cys443 is a binding site for heme.

It belongs to the cytochrome P450 family. The cofactor is heme.

Its subcellular location is the membrane. The enzyme catalyses (E)-cinnamate + reduced [NADPH--hemoprotein reductase] + O2 = (E)-4-coumarate + oxidized [NADPH--hemoprotein reductase] + H2O + H(+). The protein operates within phenylpropanoid metabolism; trans-4-coumarate biosynthesis; trans-4-coumarate from trans-cinnamate: step 1/1. Functionally, catalyzes the first oxidative step of the phenylpropanoid pathway in higher plants by transforming trans-cinnamate into p-coumarate. The compounds formed by this pathway are essential components for lignification, pollination, and defense against ultraviolet light, predators and pathogens. Can also use 2-naphthoic acid as substrate. This chain is Trans-cinnamate 4-monooxygenase, found in Sorghum bicolor (Sorghum).